A 170-amino-acid chain; its full sequence is Putative 4-hydroxy-4-methyl-2-oxoglutarate aldolase (170 aa).

Residues 81 to 84 and R103 contribute to the substrate site; that span reads GDII. D104 contributes to the a divalent metal cation binding site.

It belongs to the class II aldolase/RraA-like family. Homotrimer. It depends on a divalent metal cation as a cofactor.

It carries out the reaction 4-hydroxy-4-methyl-2-oxoglutarate = 2 pyruvate. It catalyses the reaction oxaloacetate + H(+) = pyruvate + CO2. Its function is as follows. Catalyzes the aldol cleavage of 4-hydroxy-4-methyl-2-oxoglutarate (HMG) into 2 molecules of pyruvate. Also contains a secondary oxaloacetate (OAA) decarboxylase activity due to the common pyruvate enolate transition state formed following C-C bond cleavage in the retro-aldol and decarboxylation reactions. In Corynebacterium efficiens (strain DSM 44549 / YS-314 / AJ 12310 / JCM 11189 / NBRC 100395), this protein is Putative 4-hydroxy-4-methyl-2-oxoglutarate aldolase.